Here is a 180-residue protein sequence, read N- to C-terminus: ATP-dependent protease subunit HslV (180 aa).

The active site involves threonine 6. The Na(+) site is built by alanine 164, cysteine 167, and threonine 170.

This sequence belongs to the peptidase T1B family. HslV subfamily. A double ring-shaped homohexamer of HslV is capped on each side by a ring-shaped HslU homohexamer. The assembly of the HslU/HslV complex is dependent on binding of ATP.

It localises to the cytoplasm. The catalysed reaction is ATP-dependent cleavage of peptide bonds with broad specificity.. With respect to regulation, allosterically activated by HslU binding. Protease subunit of a proteasome-like degradation complex believed to be a general protein degrading machinery. The chain is ATP-dependent protease subunit HslV from Borrelia duttonii (strain Ly).